Here is a 591-residue protein sequence, read N- to C-terminus: Protein NRT1/ PTR FAMILY 4.3 (591 aa).

Polar residues predominate over residues 1–10; sequence MAEINKQSNK. The tract at residues 1–38 is disordered; that stretch reads MAEINKQSNKWEQEEVSNENNWELAEEESVDWRGRPSN. The next 12 helical transmembrane spans lie at 47-67, 85-105, 109-129, 157-177, 204-224, 233-253, 347-367, 395-415, 429-449, 463-483, 502-522, and 551-571; these read AALFVLGLQAFEIMGIAAVGN, ANIVTNFVGTIFIFALLGGYL, FLGSFWTIIIFGFVELSGFIL, GFKAMIFFMALYLVALGSGCV, FNAAYFAFSMGELIALTLLVW, IGFGVSAAAMTMGIISLVSGT, LISLVPIFASTIVFNTILAQL, AIPYIMLIFLVPLYDSFLVPF, LTRIGIGLFLSTFSMVSAAML, ILSIFWITPQFLIFGISEMFT, FLMALTYCSYSFGFYFSSVLV, and LFYWLLAVLSLLNFLSYLFWS.

The protein belongs to the major facilitator superfamily. Proton-dependent oligopeptide transporter (POT/PTR) (TC 2.A.17) family. In terms of tissue distribution, expressed in flowers. Detected in roots and siliques.

It localises to the membrane. This chain is Protein NRT1/ PTR FAMILY 4.3 (NPF4.3), found in Arabidopsis thaliana (Mouse-ear cress).